The chain runs to 582 residues: Vesicular glutamate transporter 2 (582 aa).

At 1–71 (MESVKQRILA…CTCFGLPRRY (71 aa)) the chain is on the cytoplasmic side. A helical transmembrane segment spans residues 72–92 (IIAIMSGLGFCISFGIRCNLG). The Vesicular segment spans residues 93–125 (VAIVDMVNNSTIHRGGKVIKEKAKFNWDPETVG). 2 N-linked (GlcNAc...) asparagine glycosylation sites follow: Asn100 and Asn101. The helical transmembrane segment at 126-146 (MIHGSFFWGYIITQIPGGYIA) threads the bilayer. Topologically, residues 147–148 (SR) are cytoplasmic. The helical transmembrane segment at 149–169 (LAANRVFGAAILLTSTLNMLI) threads the bilayer. Topologically, residues 170 to 177 (PSAARVHY) are vesicular. A helical membrane pass occupies residues 178–198 (GCVIFVRILQGLVEGVTYPAC). At 199–216 (HGIWSKWAPPLERSRLAT) the chain is on the cytoplasmic side. A helical transmembrane segment spans residues 217 to 237 (TSFCGSYAGAVIAMPLAGILV). The Vesicular portion of the chain corresponds to 238 to 244 (QYTGWSS). The helical transmembrane segment at 245 to 265 (VFYVYGSFGMVWYMFWLLVSY) threads the bilayer. The Cytoplasmic segment spans residues 266 to 310 (ESPAKHPTITDEERRYIEESIGESANLLGAMEKFKTPWRKFFTSM). A helical transmembrane segment spans residues 311 to 331 (PVYAIIVANFCRSWTFYLLLI). Residues 332 to 349 (SQPAYFEEVFGFEISKVG) are Vesicular-facing. A helical transmembrane segment spans residues 350 to 370 (MLSAVPHLVMTIIVPIGGQIA). Residues 371–386 (DFLRSKQILSTTTVRK) lie on the Cytoplasmic side of the membrane. Residues 387 to 407 (IMNCGGFGMEATLLLVVGYSH) traverse the membrane as a helical segment. The Vesicular segment spans residues 408-409 (TR). Residues 410 to 430 (GVAISFLVLAVGFSGFAISGF) form a helical membrane-spanning segment. Residues 431–443 (NVNHLDIAPRYAS) are Cytoplasmic-facing. A helical transmembrane segment spans residues 444–464 (ILMGISDGVGTLSGMVCPIIV). Over 465–477 (GAMTKNKSREEWQ) the chain is Vesicular. N-linked (GlcNAc...) asparagine glycosylation occurs at Asn470. Residues 478 to 498 (YVFLIAALVHYGGVIFYALFA) form a helical membrane-spanning segment. Topologically, residues 499 to 582 (SGEKQPWADP…YTYKDRDDYS (84 aa)) are cytoplasmic.

Belongs to the major facilitator superfamily. Sodium/anion cotransporter family. VGLUT subfamily. In terms of tissue distribution, expressed in brain. Expressed in hippocampal neurons (at protein level).

The protein resides in the cytoplasmic vesicle. It is found in the secretory vesicle. It localises to the synaptic vesicle membrane. Its subcellular location is the synapse. The protein localises to the synaptosome. The protein resides in the cell membrane. It catalyses the reaction L-glutamate(out) = L-glutamate(in). The enzyme catalyses K(+)(in) + H(+)(out) = K(+)(out) + H(+)(in). It carries out the reaction 3 Na(+)(out) + phosphate(out) = 3 Na(+)(in) + phosphate(in). The catalysed reaction is phosphate(in) = phosphate(out). It catalyses the reaction chloride(in) = chloride(out). Its activity is regulated as follows. Chloride channel activity is allosterically activated by lumenal H(+) and Cl(-) leading to synaptic vesicles acidification. The L-glutamate transport activity is allosterically activated by lumenal H(+) and Cl(-). The allosteric requirement for H(+) efficiently prevents non-vesicular efflux across the plasma membrane. The L-glutamate uniporter activity exhibits a biphasic dependence on chloride concentration. Functionally, multifunctional transporter that transports L-glutamate as well as multiple ions such as chloride, proton, potassium, sodium and phosphate. At the synaptic vesicle membrane, mainly functions as a uniporter which transports preferentially L-glutamate but also, phosphate from the cytoplasm into synaptic vesicles at presynaptic nerve terminals of excitatory neural cells. The L-glutamate or phosphate uniporter activity is electrogenic and is driven by the proton electrochemical gradient, mainly by the electrical gradient established by the vacuolar H(+)-ATPase across the synaptic vesicle membrane. In addition, functions as a chloride channel that allows a chloride permeation through the synaptic vesicle membrane therefore affects the proton electrochemical gradient and promotes synaptic vesicles acidification. Moreover, functions as a vesicular K(+)/H(+) antiport allowing to maintain the electrical gradient and to decrease chemical gradient and therefore sustain vesicular glutamate uptake. The vesicular H(+)/H(+) antiport activity is electroneutral. At the plasma membrane, following exocytosis, functions as a symporter of Na(+) and phosphate from the extracellular space to the cytoplasm allowing synaptic phosphate homeostasis regulation. The symporter activity is driven by an inside negative membrane potential and is electrogenic. Also involved in the regulation of retinal hyaloid vessel regression during postnatal development. May also play a role in the endocrine glutamatergic system of other tissues such as pineal gland and pancreas. The polypeptide is Vesicular glutamate transporter 2 (Mus musculus (Mouse)).